Reading from the N-terminus, the 591-residue chain is L-fucose isomerase (591 aa).

Active-site proton acceptor residues include Glu-337 and Asp-361. Positions 337, 361, and 528 each coordinate Mn(2+).

This sequence belongs to the L-fucose isomerase family. In terms of assembly, homohexamer. Mn(2+) is required as a cofactor.

Its subcellular location is the cytoplasm. The catalysed reaction is L-fucose = L-fuculose. Its pathway is carbohydrate degradation; L-fucose degradation; L-lactaldehyde and glycerone phosphate from L-fucose: step 1/3. Its function is as follows. Converts the aldose L-fucose into the corresponding ketose L-fuculose. The polypeptide is L-fucose isomerase (Salmonella paratyphi B (strain ATCC BAA-1250 / SPB7)).